The chain runs to 239 residues: Purine nucleoside phosphorylase DeoD-type (239 aa).

Residue histidine 5 coordinates a purine D-ribonucleoside. Residues glycine 21, arginine 25, arginine 44, and 88 to 91 (RIGS) each bind phosphate. A purine D-ribonucleoside-binding positions include 180–182 (EME) and 204–205 (TD). Aspartate 205 functions as the Proton donor in the catalytic mechanism.

This sequence belongs to the PNP/UDP phosphorylase family. Homohexamer; trimer of homodimers.

It carries out the reaction a purine D-ribonucleoside + phosphate = a purine nucleobase + alpha-D-ribose 1-phosphate. The catalysed reaction is a purine 2'-deoxy-D-ribonucleoside + phosphate = a purine nucleobase + 2-deoxy-alpha-D-ribose 1-phosphate. Catalyzes the reversible phosphorolytic breakdown of the N-glycosidic bond in the beta-(deoxy)ribonucleoside molecules, with the formation of the corresponding free purine bases and pentose-1-phosphate. This Aliivibrio fischeri (strain ATCC 700601 / ES114) (Vibrio fischeri) protein is Purine nucleoside phosphorylase DeoD-type.